A 179-amino-acid chain; its full sequence is Large ribosomal subunit protein uL6 (179 aa).

It belongs to the universal ribosomal protein uL6 family. Part of the 50S ribosomal subunit.

Its function is as follows. This protein binds to the 23S rRNA, and is important in its secondary structure. It is located near the subunit interface in the base of the L7/L12 stalk, and near the tRNA binding site of the peptidyltransferase center. In Bifidobacterium longum (strain DJO10A), this protein is Large ribosomal subunit protein uL6.